Reading from the N-terminus, the 180-residue chain is MENFFNQFFENIGEDKNREGLKETPKRVQELWKFLYKGYKEDPKVALKSAYFQGVCDEMIVAQNIEFYSTCEHHLLPFFGNISVGYIPKEKIVGISAIAKLIEIYSKRLQIQERLTTQIAETFDEIIEPRGVIVVCEAKHLCMSMQGVQKQNAIIKTSVLRGLFKKDPKTRAEFMQLLKS.

The Zn(2+) site is built by Cys71, His74, and Cys142.

Belongs to the GTP cyclohydrolase I family. In terms of assembly, homomer.

It carries out the reaction GTP + H2O = 7,8-dihydroneopterin 3'-triphosphate + formate + H(+). Its pathway is cofactor biosynthesis; 7,8-dihydroneopterin triphosphate biosynthesis; 7,8-dihydroneopterin triphosphate from GTP: step 1/1. The chain is GTP cyclohydrolase 1 from Helicobacter pylori (strain G27).